We begin with the raw amino-acid sequence, 152 residues long: Protein Smg homolog (152 aa).

The protein belongs to the Smg family.

The protein is Protein Smg homolog of Nitrosomonas eutropha (strain DSM 101675 / C91 / Nm57).